A 284-amino-acid polypeptide reads, in one-letter code: Pantothenate synthetase (284 aa).

ATP is bound at residue 30-37 (MGFLHEGH). The active-site Proton donor is the His37. A (R)-pantoate-binding site is contributed by Gln61. Gln61 provides a ligand contact to beta-alanine. Residue 147-150 (GRKD) participates in ATP binding. Gln153 is a binding site for (R)-pantoate. Residues Val176 and 184–187 (MSSR) contribute to the ATP site.

The protein belongs to the pantothenate synthetase family. Homodimer.

The protein localises to the cytoplasm. It catalyses the reaction (R)-pantoate + beta-alanine + ATP = (R)-pantothenate + AMP + diphosphate + H(+). It participates in cofactor biosynthesis; (R)-pantothenate biosynthesis; (R)-pantothenate from (R)-pantoate and beta-alanine: step 1/1. Functionally, catalyzes the condensation of pantoate with beta-alanine in an ATP-dependent reaction via a pantoyl-adenylate intermediate. The protein is Pantothenate synthetase of Pelobacter propionicus (strain DSM 2379 / NBRC 103807 / OttBd1).